The chain runs to 657 residues: MMYQNICIMIIMLPLASSIINGLFLRVIDKKLAQVIATGFLSLSALFSLIIFCDTGLDGNIIHIKLLPWIEVGTFKVNWSIYIDQLTSIMFIAVTWVSSIVHIYSLGYMAEDKGIIRFLSFLSLFTFFMLMLVSSDNFLQLFFGWEGVGVCSYLLIGFWYSKESANKAAIKAFIINRASDFAFILGVITIIVYCGSANYKDVLSSAELLSNIKIFLHFSILDIICLLLFIGCMGKSAQIGLHVWLPDAMEGPTPVSALIHAATMVTAGVFLVARCSYLFEYSPLILQFITIIGGVTCLFAASIAIMHSDIKKIIAYSTCSQLGYMFMACGVSAYNSGIFHLVTHAFFKALLFLSAGSVIHAVHEQDIFKMGDLRNKMPVTYGNFLIGSLALIGIYPLAGFYSKDSILEAAYSSGSFMFIFGIAAAILTAIYSMKIIMLVFHGKTKLEKDVFEHAHEPAKVMNNPLILLVVGSFFSGMIGYYLLAMDKPNGYFHASLFNLHIYKLLISHPPLYIKLLPMAVGIVGIVTGIYLYKSSTVMSFPQKRKSSKNIKNAWILRSSRGMTPLVLISNILRNKYYFDEIYNCLIVKPINCLASLFYLGDQQIIDRFGPNGFSRVVNCFSVLTGKIQTGYVFNYALYIVSFIVVTISYFVWKNIMY.

The next 17 membrane-spanning stretches (helical) occupy residues 5–25 (NICI…GLFL), 32–52 (LAQV…LIIF), 89–109 (IMFI…LGYM), 114–134 (GIIR…MLVS), 138–158 (FLQL…LIGF), 172–192 (AFII…TIIV), 214–234 (IFLH…GCMG), 253–273 (TPVS…FLVA), 285–305 (ILQF…SIAI), 313–333 (IIAY…GVSA), 339–359 (FHLV…GSVI), 381–401 (YGNF…AGFY), 416–436 (FMFI…MKII), 465–485 (LILL…LLAM), 511–531 (LYIK…GIYL), 580–600 (EIYN…FYLG), and 632–652 (VFNY…YFVW).

It belongs to the complex I subunit 5 family.

Its subcellular location is the cell membrane. The catalysed reaction is a quinone + NADH + 5 H(+)(in) = a quinol + NAD(+) + 4 H(+)(out). In terms of biological role, NDH-1 shuttles electrons from NADH, via FMN and iron-sulfur (Fe-S) centers, to quinones in the respiratory chain. Couples the redox reaction to proton translocation (for every two electrons transferred, four hydrogen ions are translocated across the cytoplasmic membrane), and thus conserves the redox energy in a proton gradient. This chain is NADH-quinone oxidoreductase subunit L (nuoL), found in Rickettsia conorii (strain ATCC VR-613 / Malish 7).